An 89-amino-acid polypeptide reads, in one-letter code: Small ribosomal subunit protein uS15 (89 aa).

This sequence belongs to the universal ribosomal protein uS15 family. As to quaternary structure, part of the 30S ribosomal subunit. Forms a bridge to the 50S subunit in the 70S ribosome, contacting the 23S rRNA.

Its function is as follows. One of the primary rRNA binding proteins, it binds directly to 16S rRNA where it helps nucleate assembly of the platform of the 30S subunit by binding and bridging several RNA helices of the 16S rRNA. Forms an intersubunit bridge (bridge B4) with the 23S rRNA of the 50S subunit in the ribosome. This chain is Small ribosomal subunit protein uS15, found in Pectobacterium atrosepticum (strain SCRI 1043 / ATCC BAA-672) (Erwinia carotovora subsp. atroseptica).